An 805-amino-acid chain; its full sequence is Mediator of RNA polymerase II transcription subunit 25 (805 aa).

Disordered stretches follow at residues 430-455 (GSAQ…GQTV) and 786-805 (SQSQ…GFMN). 2 stretches are compositionally biased toward low complexity: residues 438–451 (SAPS…PSMS) and 786–795 (SQSQGSSQGL).

The protein belongs to the Mediator complex subunit 25 family. In terms of assembly, interacts with MYC2 (via N-terminus). MED25 competes with JAZ7 for binding to MYC2.

In terms of biological role, component of the Mediator complex, a coactivator involved in the regulated transcription of nearly all RNA polymerase II-dependent genes. Mediator functions as a bridge to convey information from gene-specific regulatory proteins to the basal RNA polymerase II transcription machinery. Mediator is recruited to promoters by direct interactions with regulatory proteins and serves as a scaffold for the assembly of a functional pre-initiation complex with RNA polymerase II and the general transcription factors. Plays a positive role in wound-induced activation of jasmonate-responsive genes whose promoters are targeted by MYC2. The sequence is that of Mediator of RNA polymerase II transcription subunit 25 from Solanum lycopersicum (Tomato).